A 257-amino-acid polypeptide reads, in one-letter code: NAD kinase (257 aa).

Residue Asp-46 is the Proton acceptor of the active site. NAD(+)-binding positions include Asp-46–Gly-47, Asn-116–Glu-117, Asp-146, Ala-154, and Thr-157–Ser-162.

It belongs to the NAD kinase family. It depends on a divalent metal cation as a cofactor.

It localises to the cytoplasm. The catalysed reaction is NAD(+) + ATP = ADP + NADP(+) + H(+). Its function is as follows. Involved in the regulation of the intracellular balance of NAD and NADP, and is a key enzyme in the biosynthesis of NADP. Catalyzes specifically the phosphorylation on 2'-hydroxyl of the adenosine moiety of NAD to yield NADP. This chain is NAD kinase, found in Mesorhizobium japonicum (strain LMG 29417 / CECT 9101 / MAFF 303099) (Mesorhizobium loti (strain MAFF 303099)).